Here is a 273-residue protein sequence, read N- to C-terminus: Rhamnulose-1-phosphate aldolase (273 aa).

Glu-117 is a catalytic residue. Positions 140, 142, and 211 each coordinate Zn(2+).

Belongs to the aldolase class II family. RhaD subfamily. Requires Zn(2+) as cofactor.

It localises to the cytoplasm. The enzyme catalyses L-rhamnulose 1-phosphate = (S)-lactaldehyde + dihydroxyacetone phosphate. It participates in carbohydrate degradation; L-rhamnose degradation; glycerone phosphate from L-rhamnose: step 3/3. In terms of biological role, catalyzes the reversible cleavage of L-rhamnulose-1-phosphate to dihydroxyacetone phosphate (DHAP) and L-lactaldehyde. This Listeria monocytogenes serotype 4a (strain HCC23) protein is Rhamnulose-1-phosphate aldolase.